Consider the following 326-residue polypeptide: Aspartate carbamoyltransferase catalytic subunit (326 aa).

Positions 58 and 59 each coordinate carbamoyl phosphate. K86 is a binding site for L-aspartate. The carbamoyl phosphate site is built by R108, H141, and Q144. L-aspartate contacts are provided by R181 and R239. Residues G280 and P281 each contribute to the carbamoyl phosphate site.

The protein belongs to the aspartate/ornithine carbamoyltransferase superfamily. ATCase family. In terms of assembly, heterododecamer (2C3:3R2) of six catalytic PyrB chains organized as two trimers (C3), and six regulatory PyrI chains organized as three dimers (R2).

The enzyme catalyses carbamoyl phosphate + L-aspartate = N-carbamoyl-L-aspartate + phosphate + H(+). It functions in the pathway pyrimidine metabolism; UMP biosynthesis via de novo pathway; (S)-dihydroorotate from bicarbonate: step 2/3. In terms of biological role, catalyzes the condensation of carbamoyl phosphate and aspartate to form carbamoyl aspartate and inorganic phosphate, the committed step in the de novo pyrimidine nucleotide biosynthesis pathway. The polypeptide is Aspartate carbamoyltransferase catalytic subunit (Synechococcus sp. (strain JA-3-3Ab) (Cyanobacteria bacterium Yellowstone A-Prime)).